A 226-amino-acid chain; its full sequence is Phosphoribosylformylglycinamidine synthase subunit PurQ (226 aa).

Residues 4–226 (RIGVVTFPGS…TSILKKLVNA (223 aa)) form the Glutamine amidotransferase type-1 domain. Cys87 (nucleophile) is an active-site residue. Active-site residues include His196 and Glu198.

Part of the FGAM synthase complex composed of 1 PurL, 1 PurQ and 2 PurS subunits.

It localises to the cytoplasm. It catalyses the reaction N(2)-formyl-N(1)-(5-phospho-beta-D-ribosyl)glycinamide + L-glutamine + ATP + H2O = 2-formamido-N(1)-(5-O-phospho-beta-D-ribosyl)acetamidine + L-glutamate + ADP + phosphate + H(+). It carries out the reaction L-glutamine + H2O = L-glutamate + NH4(+). It participates in purine metabolism; IMP biosynthesis via de novo pathway; 5-amino-1-(5-phospho-D-ribosyl)imidazole from N(2)-formyl-N(1)-(5-phospho-D-ribosyl)glycinamide: step 1/2. Its function is as follows. Part of the phosphoribosylformylglycinamidine synthase complex involved in the purines biosynthetic pathway. Catalyzes the ATP-dependent conversion of formylglycinamide ribonucleotide (FGAR) and glutamine to yield formylglycinamidine ribonucleotide (FGAM) and glutamate. The FGAM synthase complex is composed of three subunits. PurQ produces an ammonia molecule by converting glutamine to glutamate. PurL transfers the ammonia molecule to FGAR to form FGAM in an ATP-dependent manner. PurS interacts with PurQ and PurL and is thought to assist in the transfer of the ammonia molecule from PurQ to PurL. The polypeptide is Phosphoribosylformylglycinamidine synthase subunit PurQ (Streptomyces coelicolor (strain ATCC BAA-471 / A3(2) / M145)).